A 123-amino-acid polypeptide reads, in one-letter code: Small ribosomal subunit protein uS12cz/uS12cy (123 aa).

This sequence belongs to the universal ribosomal protein uS12 family. Part of the 30S ribosomal subunit.

Its subcellular location is the plastid. The protein resides in the chloroplast. Its function is as follows. With S4 and S5 plays an important role in translational accuracy. Located at the interface of the 30S and 50S subunits. The polypeptide is Small ribosomal subunit protein uS12cz/uS12cy (rps12-A) (Arabis hirsuta (Hairy rock-cress)).